Consider the following 482-residue polypeptide: Protein trichome birefringence-like 15 (482 aa).

A helical; Signal-anchor for type II membrane protein transmembrane segment spans residues 109 to 129; it reads GSVSLSLIILILLVTTLLVSA. The GDS motif motif lies at 217-219; it reads GDS. The short motif at 461–475 is the DCXHWCLPGXXDXWN motif element; it reads DCLHWCLPGIPDTWN.

It belongs to the PC-esterase family. TBL subfamily.

It localises to the membrane. Its function is as follows. May act as a bridging protein that binds pectin and other cell wall polysaccharides. Probably involved in maintaining esterification of pectins. May be involved in the specific O-acetylation of cell wall polymers. The sequence is that of Protein trichome birefringence-like 15 (TBL15) from Arabidopsis thaliana (Mouse-ear cress).